A 171-amino-acid polypeptide reads, in one-letter code: Protein BTG1 (171 aa).

Position 159 is a phosphoserine (Ser159).

It belongs to the BTG family. Interacts with CNOT7 and CNOT8.

In terms of biological role, anti-proliferative protein. The protein is Protein BTG1 (BTG1) of Homo sapiens (Human).